Reading from the N-terminus, the 367-residue chain is tRNA-dihydrouridine(20a/20b) synthase [NAD(P)+] (367 aa).

Residues 45–47 (PMV) and Gln-99 each bind FMN. Cys-128 acts as the Proton donor in catalysis. FMN is bound by residues Lys-169, His-197, 231–233 (NGD), and 255–256 (VR).

It belongs to the Dus family. Dus4 subfamily. Requires FMN as cofactor.

It catalyses the reaction 5,6-dihydrouridine(20a) in tRNA + NADP(+) = uridine(20a) in tRNA + NADPH + H(+). The catalysed reaction is 5,6-dihydrouridine(20a) in tRNA + NAD(+) = uridine(20a) in tRNA + NADH + H(+). It carries out the reaction 5,6-dihydrouridine(20b) in tRNA + NAD(+) = uridine(20b) in tRNA + NADH + H(+). The enzyme catalyses 5,6-dihydrouridine(20b) in tRNA + NADP(+) = uridine(20b) in tRNA + NADPH + H(+). It catalyses the reaction a 5,6-dihydrouridine in mRNA + NAD(+) = a uridine in mRNA + NADH + H(+). The catalysed reaction is a 5,6-dihydrouridine in mRNA + NADP(+) = a uridine in mRNA + NADPH + H(+). Catalyzes the synthesis of dihydrouridine, a modified base found in the D-loop of most tRNAs. Specifically modifies U20a and U20b in cytoplasmic tRNAs. Also able to mediate dihydrouridylation of some mRNAs, thereby affecting their translation. In Saccharomyces cerevisiae (strain ATCC 204508 / S288c) (Baker's yeast), this protein is tRNA-dihydrouridine(20a/20b) synthase [NAD(P)+].